Consider the following 62-residue polypeptide: Conotoxin Pl168 (62 aa).

The signal sequence occupies residues 1 to 21 (MGMRMMFTVFLLVVLATTVVS). Residues 22–40 (FTLDRASDGANAAADLVAR) constitute a propeptide that is removed on maturation. 2 disulfide bridges follow: Cys-46–Cys-52 and Cys-47–Cys-61.

This sequence belongs to the conotoxin A superfamily. Post-translationally, both Pro-53 and Pro-62 are not in cis/trans isomerization. In terms of tissue distribution, expressed by the venom duct.

Its subcellular location is the secreted. Probable neurotoxin with unknown target. Possibly targets ion channels. This chain is Conotoxin Pl168, found in Conus planorbis (Planorbis cone).